We begin with the raw amino-acid sequence, 103 residues long: Ribonuclease VapC14 (103 aa).

Positions 3–74 constitute a PINc domain; sequence YVLDTNVVSA…WFDDKVLRIF (72 aa). Aspartate 6 lines the Mg(2+) pocket.

The protein belongs to the PINc/VapC protein family. Mg(2+) serves as cofactor.

Its function is as follows. Toxic component of a type II toxin-antitoxin (TA) system. An RNase. The cognate antitoxin is VapB14. This chain is Ribonuclease VapC14 (vapC14), found in Mycobacterium tuberculosis (strain CDC 1551 / Oshkosh).